The sequence spans 204 residues: Large ribosomal subunit protein eL15 (204 aa).

The protein belongs to the eukaryotic ribosomal protein eL15 family.

This is Large ribosomal subunit protein eL15 (RpL15) from Anopheles gambiae (African malaria mosquito).